A 418-amino-acid chain; its full sequence is uncharacterized protein (418 aa).

Belongs to the poxviruses C4/C10 family.

This is an uncharacterized protein from Fowlpox virus (strain NVSL) (FPV).